The sequence spans 220 residues: N-(5'-phosphoribosyl)anthranilate isomerase (220 aa).

Belongs to the TrpF family.

The catalysed reaction is N-(5-phospho-beta-D-ribosyl)anthranilate = 1-(2-carboxyphenylamino)-1-deoxy-D-ribulose 5-phosphate. It functions in the pathway amino-acid biosynthesis; L-tryptophan biosynthesis; L-tryptophan from chorismate: step 3/5. The polypeptide is N-(5'-phosphoribosyl)anthranilate isomerase (Leptothrix cholodnii (strain ATCC 51168 / LMG 8142 / SP-6) (Leptothrix discophora (strain SP-6))).